The chain runs to 96 residues: Protein TraA (96 aa).

In Escherichia coli, this protein is Protein TraA (traA).